Consider the following 208-residue polypeptide: Small ribosomal subunit protein uS4 (208 aa).

The S4 RNA-binding domain maps to 99–165; sequence RRLDNVVFQL…PRLKEILSSL (67 aa).

The protein belongs to the universal ribosomal protein uS4 family. Part of the 30S ribosomal subunit. Contacts protein S5. The interaction surface between S4 and S5 is involved in control of translational fidelity.

In terms of biological role, one of the primary rRNA binding proteins, it binds directly to 16S rRNA where it nucleates assembly of the body of the 30S subunit. With S5 and S12 plays an important role in translational accuracy. This Desulfitobacterium hafniense (strain DSM 10664 / DCB-2) protein is Small ribosomal subunit protein uS4.